We begin with the raw amino-acid sequence, 202 residues long: Transmembrane 4 L6 family member 4 (202 aa).

Topologically, residues 1 to 9 are cytoplasmic; the sequence is MCTGGCARC. The helical transmembrane segment at 10 to 30 threads the bilayer; it reads LGGTLIPLAVFAVLANILLFF. Over 31-48 the chain is Extracellular; it reads PGGKVVDDNSHLSDEVWY. A helical membrane pass occupies residues 49–69; it reads FGGILGSGVLMIFPALVFLGL. Topologically, residues 70-93 are cytoplasmic; sequence QNNDCCGCCGNESCGKRFAMFTST. A helical transmembrane segment spans residues 94–114; sequence LFAVVGFLGAAYSFIVSAVSI. At 115–158 the chain is on the extracellular side; that stretch reads NKGPKCFMTNNTWGYPFHDGDYLNDQALWSKCEEPRDVVPWNLT. An N-linked (GlcNAc...) asparagine glycan is attached at N156. Residues 159 to 179 traverse the membrane as a helical segment; sequence LFSILLVIGGIQMVLCAIQVI. The Cytoplasmic segment spans residues 180-202; it reads NGLLGTLCGDCQCCGCCGGDRPV.

The protein belongs to the L6 tetraspanin family. Expressed in liver and testis. Up-regulated in regenerating liver after partial hepatectomy.

It localises to the membrane. Functionally, regulates the adhesive and proliferative status of intestinal epithelial cells. Can mediate density-dependent cell proliferation. The chain is Transmembrane 4 L6 family member 4 (Tm4sf4) from Rattus norvegicus (Rat).